We begin with the raw amino-acid sequence, 101 residues long: DET1- and DDB1-associated protein 1 (101 aa).

A disordered region spans residues 67 to 101; sequence NAAKKRDQDQLEIGETSAPPRKIARTDSQEMSEDT.

It belongs to the DDA1 family. In terms of assembly, component of numerous DCX (DDB1-CUL4-X-box) E3 ubiquitin-protein ligase complexes which consist of a core of DDB1, cullin-4 (CUL4A or CUL4B), DDA1 and RBX1.

It functions in the pathway protein modification; protein ubiquitination. Functions as a component of numerous distinct DCX (DDB1-CUL4-X-box) E3 ubiquitin-protein ligase complexes which mediate the ubiquitination and subsequent proteasomal degradation of target proteins. In the DCX complexes, acts as a scaffolding subunit required to stabilize the complex. This is DET1- and DDB1-associated protein 1 from Xenopus tropicalis (Western clawed frog).